An 862-amino-acid chain; its full sequence is Kinesin-like protein KIN-7J (862 aa).

The Kinesin motor domain maps to 9–331 (RIVVSVRLRP…LLFANCAKDV (323 aa)). 95–102 (GQTSSGKT) provides a ligand contact to ATP. A coiled-coil region spans residues 340–415 (VMSDKALVKH…NFRKVASDGD (76 aa)). 2 stretches are compositionally biased toward basic and acidic residues: residues 475 to 499 (EEHEAQRVAHRAESEPPEEHCKEVQ) and 518 to 531 (PEKKTHTDDQKHSE). Disordered stretches follow at residues 475–532 (EEHE…HSES) and 596–643 (DDSA…STCN). Over residues 598–610 (SASTTPSSETFRY) the composition is skewed to polar residues. Basic and acidic residues predominate over residues 613 to 629 (RRPEKVRKSLSPDEIAD).

Belongs to the TRAFAC class myosin-kinesin ATPase superfamily. Kinesin family. KIN-7 subfamily.

The polypeptide is Kinesin-like protein KIN-7J (Oryza sativa subsp. japonica (Rice)).